We begin with the raw amino-acid sequence, 515 residues long: Maturase K (515 aa).

The protein belongs to the intron maturase 2 family. MatK subfamily.

It localises to the plastid. Its subcellular location is the chloroplast. Its function is as follows. Usually encoded in the trnK tRNA gene intron. Probably assists in splicing its own and other chloroplast group II introns. The chain is Maturase K from Pinus pumila (Dwarf Siberian pine).